We begin with the raw amino-acid sequence, 183 residues long: Ribosomal RNA small subunit methyltransferase G (183 aa).

S-adenosyl-L-methionine contacts are provided by residues glycine 60, phenylalanine 65, 111–112, and arginine 125; that span reads IE.

Belongs to the methyltransferase superfamily. RNA methyltransferase RsmG family.

Its subcellular location is the cytoplasm. It carries out the reaction guanosine(527) in 16S rRNA + S-adenosyl-L-methionine = N(7)-methylguanosine(527) in 16S rRNA + S-adenosyl-L-homocysteine. Functionally, specifically methylates the N7 position of guanine in position 527 of 16S rRNA. The chain is Ribosomal RNA small subunit methyltransferase G from Campylobacter hominis (strain ATCC BAA-381 / DSM 21671 / CCUG 45161 / LMG 19568 / NCTC 13146 / CH001A).